Consider the following 355-residue polypeptide: UDP-3-O-acylglucosamine N-acyltransferase (355 aa).

The active-site Proton acceptor is the H258.

This sequence belongs to the transferase hexapeptide repeat family. LpxD subfamily. Homotrimer.

It carries out the reaction a UDP-3-O-[(3R)-3-hydroxyacyl]-alpha-D-glucosamine + a (3R)-hydroxyacyl-[ACP] = a UDP-2-N,3-O-bis[(3R)-3-hydroxyacyl]-alpha-D-glucosamine + holo-[ACP] + H(+). It participates in bacterial outer membrane biogenesis; LPS lipid A biosynthesis. Its function is as follows. Catalyzes the N-acylation of UDP-3-O-acylglucosamine using 3-hydroxyacyl-ACP as the acyl donor. Is involved in the biosynthesis of lipid A, a phosphorylated glycolipid that anchors the lipopolysaccharide to the outer membrane of the cell. The protein is UDP-3-O-acylglucosamine N-acyltransferase of Agrobacterium fabrum (strain C58 / ATCC 33970) (Agrobacterium tumefaciens (strain C58)).